The sequence spans 134 residues: MFGLISLWHLFWLAVMAGILVVAHRNRETIRYKTSEFMVRLRSRFGGYTSINDHFVRDLEDGFSSQNFDLTSANSNDTRSGLDEASKQEIRRIMEEQGLGFDQARLVYTTRKFGAHGIAPDGMPLDPKVVTFRR.

The N-terminal stretch at 1–23 is a signal peptide; that stretch reads MFGLISLWHLFWLAVMAGILVVA.

Belongs to the UPF0357 family.

The sequence is that of UPF0357 protein AAL017W from Eremothecium gossypii (strain ATCC 10895 / CBS 109.51 / FGSC 9923 / NRRL Y-1056) (Yeast).